Consider the following 465-residue polypeptide: Cysteine--tRNA ligase (465 aa).

Cys-27 is a binding site for Zn(2+). The short motif at Pro-29 to Asn-39 is the 'HIGH' region element. The Zn(2+) site is built by Cys-207, His-232, and Glu-236. The 'KMSKS' region signature appears at Lys-264–Ser-268. An ATP-binding site is contributed by Lys-267.

Belongs to the class-I aminoacyl-tRNA synthetase family. Monomer. It depends on Zn(2+) as a cofactor.

The protein resides in the cytoplasm. It catalyses the reaction tRNA(Cys) + L-cysteine + ATP = L-cysteinyl-tRNA(Cys) + AMP + diphosphate. The polypeptide is Cysteine--tRNA ligase (Clostridium kluyveri (strain NBRC 12016)).